The chain runs to 308 residues: Oxygen-dependent coproporphyrinogen-III oxidase (308 aa).

Residue S100 coordinates substrate. Residues H104 and H114 each contribute to the a divalent metal cation site. Catalysis depends on H114, which acts as the Proton donor. Position 116–118 (116–118 (NFR)) interacts with substrate. A divalent metal cation contacts are provided by H153 and H183. The tract at residues 248–283 (YVEFNLVFDRGTIFGLQSGGRTESILSSMPPMATWK) is important for dimerization. 266–268 (GGR) provides a ligand contact to substrate.

The protein belongs to the aerobic coproporphyrinogen-III oxidase family. As to quaternary structure, homodimer. It depends on a divalent metal cation as a cofactor.

It localises to the cytoplasm. It carries out the reaction coproporphyrinogen III + O2 + 2 H(+) = protoporphyrinogen IX + 2 CO2 + 2 H2O. It participates in porphyrin-containing compound metabolism; protoporphyrin-IX biosynthesis; protoporphyrinogen-IX from coproporphyrinogen-III (O2 route): step 1/1. Involved in the heme biosynthesis. Catalyzes the aerobic oxidative decarboxylation of propionate groups of rings A and B of coproporphyrinogen-III to yield the vinyl groups in protoporphyrinogen-IX. The sequence is that of Oxygen-dependent coproporphyrinogen-III oxidase from Francisella philomiragia subsp. philomiragia (strain ATCC 25017 / CCUG 19701 / FSC 153 / O#319-036).